The following is a 337-amino-acid chain: Phenylalanine--tRNA ligase alpha subunit (337 aa).

E252 contributes to the Mg(2+) binding site.

This sequence belongs to the class-II aminoacyl-tRNA synthetase family. Phe-tRNA synthetase alpha subunit type 1 subfamily. In terms of assembly, tetramer of two alpha and two beta subunits. Mg(2+) serves as cofactor.

The protein localises to the cytoplasm. The catalysed reaction is tRNA(Phe) + L-phenylalanine + ATP = L-phenylalanyl-tRNA(Phe) + AMP + diphosphate + H(+). The polypeptide is Phenylalanine--tRNA ligase alpha subunit (Francisella tularensis subsp. novicida (strain U112)).